The primary structure comprises 380 residues: uncharacterized protein (380 aa).

Disordered stretches follow at residues 278 to 323 and 345 to 368; these read AATI…PRVA and SLPG…RPRR. The span at 301-319 shows a compositional bias: basic residues; it reads RNGPRRPARRGTSRGRRCA.

This is an uncharacterized protein from Mycobacterium tuberculosis (strain CDC 1551 / Oshkosh).